A 167-amino-acid chain; its full sequence is Cytochrome c-type biogenesis protein CcmE (167 aa).

Topologically, residues 1–7 are cytoplasmic; that stretch reads MTRKQRR. The helical; Signal-anchor for type II membrane protein transmembrane segment at 8–28 threads the bilayer; sequence LLMIGGAGVVLIVAVGLVLNA. Topologically, residues 29–167 are periplasmic; the sequence is LRDSIVFFST…TSANAAEGGK (139 aa). 2 residues coordinate heme: His-122 and Tyr-126. A compositionally biased stretch (basic and acidic residues) spans 137–150; sequence KDGHWKDDYGKKSP. The tract at residues 137-167 is disordered; the sequence is KDGHWKDDYGKKSPGETTAGQTSANAAEGGK. The segment covering 151–161 has biased composition (polar residues); sequence GETTAGQTSAN.

The protein belongs to the CcmE/CycJ family.

It localises to the cell inner membrane. Its function is as follows. Heme chaperone required for the biogenesis of c-type cytochromes. Transiently binds heme delivered by CcmC and transfers the heme to apo-cytochromes in a process facilitated by CcmF and CcmH. This Rhodopseudomonas palustris (strain ATCC BAA-98 / CGA009) protein is Cytochrome c-type biogenesis protein CcmE.